Reading from the N-terminus, the 679-residue chain is Penicillin-binding protein PbpB (679 aa).

Residues 1–74 (MSRAAPRRAS…STRARRTRQV (74 aa)) are disordered. The Cytoplasmic segment spans residues 1 to 90 (MSRAAPRRAS…GASFVFRHRT (90 aa)). Residues 42-54 (ARQAQEATKSRPA) are compositionally biased toward polar residues. Residues 91-111 (GNAVILVLMLVAATQLFFLQV) form a helical membrane-spanning segment. Residues 112 to 679 (SHAAGLRAQA…PGPPLVLQAT (568 aa)) are Extracellular-facing. Catalysis depends on S386, which acts as the Acyl-ester intermediate.

It belongs to the transpeptidase family. As to quaternary structure, interacts with Wag31. Post-translationally, cleaved by Rip1 in response to oxidative stress (H(2)O(2)), prevented by Wag31. Cleavage probably occurs near residues 102-103.

The protein resides in the cell membrane. Its pathway is cell wall biogenesis; peptidoglycan biosynthesis. Functionally, synthesis of cross-linked peptidoglycan from the lipid intermediates. The chain is Penicillin-binding protein PbpB (pbpB) from Mycobacterium tuberculosis (strain ATCC 25618 / H37Rv).